We begin with the raw amino-acid sequence, 307 residues long: Ribonuclease Z (307 aa).

Zn(2+) is bound by residues H61, H63, D65, H66, H138, D208, and H264. The active-site Proton acceptor is D65.

It belongs to the RNase Z family. In terms of assembly, homodimer. It depends on Zn(2+) as a cofactor.

The enzyme catalyses Endonucleolytic cleavage of RNA, removing extra 3' nucleotides from tRNA precursor, generating 3' termini of tRNAs. A 3'-hydroxy group is left at the tRNA terminus and a 5'-phosphoryl group is left at the trailer molecule.. In terms of biological role, zinc phosphodiesterase, which displays some tRNA 3'-processing endonuclease activity. Probably involved in tRNA maturation, by removing a 3'-trailer from precursor tRNA. The polypeptide is Ribonuclease Z (Pyrococcus horikoshii (strain ATCC 700860 / DSM 12428 / JCM 9974 / NBRC 100139 / OT-3)).